Here is a 202-residue protein sequence, read N- to C-terminus: Imidazole glycerol phosphate synthase subunit HisH 2 (202 aa).

One can recognise a Glutamine amidotransferase type-1 domain in the interval 1-202; it reads MIVVIDYGVG…QLFKNFVELV (202 aa). The Nucleophile role is filled by Cys-80. Catalysis depends on residues His-183 and Glu-185.

As to quaternary structure, heterodimer of HisH and HisF.

It localises to the cytoplasm. The enzyme catalyses 5-[(5-phospho-1-deoxy-D-ribulos-1-ylimino)methylamino]-1-(5-phospho-beta-D-ribosyl)imidazole-4-carboxamide + L-glutamine = D-erythro-1-(imidazol-4-yl)glycerol 3-phosphate + 5-amino-1-(5-phospho-beta-D-ribosyl)imidazole-4-carboxamide + L-glutamate + H(+). The catalysed reaction is L-glutamine + H2O = L-glutamate + NH4(+). It participates in amino-acid biosynthesis; L-histidine biosynthesis; L-histidine from 5-phospho-alpha-D-ribose 1-diphosphate: step 5/9. Functionally, IGPS catalyzes the conversion of PRFAR and glutamine to IGP, AICAR and glutamate. The HisH subunit catalyzes the hydrolysis of glutamine to glutamate and ammonia as part of the synthesis of IGP and AICAR. The resulting ammonia molecule is channeled to the active site of HisF. The sequence is that of Imidazole glycerol phosphate synthase subunit HisH 2 (hisH2) from Pseudomonas aeruginosa (strain ATCC 15692 / DSM 22644 / CIP 104116 / JCM 14847 / LMG 12228 / 1C / PRS 101 / PAO1).